The sequence spans 87 residues: UPF0213 protein SSA_0709 (87 aa).

The region spanning 3–78 is the GIY-YIG domain; the sequence is NKAYMYVLEC…KKKTRQAKLA (76 aa).

The protein belongs to the UPF0213 family.

The sequence is that of UPF0213 protein SSA_0709 from Streptococcus sanguinis (strain SK36).